The primary structure comprises 497 residues: Cytochrome P450 monooxygenase 151 (497 aa).

The helical transmembrane segment at 1–21 threads the bilayer; that stretch reads MTDLVPVYYAFAGVVAALLFY. N-linked (GlcNAc...) asparagine glycosylation is found at asparagine 292 and asparagine 397. A heme-binding site is contributed by cysteine 441.

Belongs to the cytochrome P450 family. Heme is required as a cofactor.

The protein localises to the membrane. It functions in the pathway secondary metabolite biosynthesis. In terms of biological role, cytochrome P450 monooxygenase that is able to use dehydroabietic acid and testosterone as substrates for oxidation, suggesting that the natural substrate(s) may be structurally related to steroid compounds. The sequence is that of Cytochrome P450 monooxygenase 151 from Postia placenta (strain ATCC 44394 / Madison 698-R) (Brown rot fungus).